Consider the following 486-residue polypeptide: MREKLIFDLSRNGRKGYSLSKNDLPETSVAAVIPSKFLRTTPAELPEVPESEVVRHFIRLSNLNYHVDKNMYPLGSCTMKYNPKVNDYTCDLPGFSTLHPLQPSETTQGALRLMYELSSMLSEIAGMAAVSLQPAAGAHGELTGILLIKKYHEAQGKMRNKLLVVDSAHGTNPASAAIAGYEIISVRSNADGRTDLEDLKARLQSDVAALMLTNPNTIGLFEKDILAIERMVHENGSLLYMDGANMNALLGITRPGDMGFDVVHYNLHKTFSAPHGGGGPGSGPIGVSARLAGYLPVPVIEKEESATGTSYRLNYDRPESIGRMISFYGNFSVLVRAYTYIRMLGPEGLRRVSENAIINANYLLSLLLERYDLPYPKSVMHEFCLSGDRQKKANGVKTLDMAKRLLDYGFHAPTIYFPLIVSEALMIEPTETETKETLERFAEAMIAIADEAENNPALVKSAPETTPVKRLDEAQASRQLNICCSL.

Residue Lys-269 is modified to N6-(pyridoxal phosphate)lysine.

The protein belongs to the GcvP family. C-terminal subunit subfamily. As to quaternary structure, the glycine cleavage system is composed of four proteins: P, T, L and H. In this organism, the P 'protein' is a heterodimer of two subunits. The cofactor is pyridoxal 5'-phosphate.

It carries out the reaction N(6)-[(R)-lipoyl]-L-lysyl-[glycine-cleavage complex H protein] + glycine + H(+) = N(6)-[(R)-S(8)-aminomethyldihydrolipoyl]-L-lysyl-[glycine-cleavage complex H protein] + CO2. Its function is as follows. The glycine cleavage system catalyzes the degradation of glycine. The P protein binds the alpha-amino group of glycine through its pyridoxal phosphate cofactor; CO(2) is released and the remaining methylamine moiety is then transferred to the lipoamide cofactor of the H protein. The protein is Probable glycine dehydrogenase (decarboxylating) subunit 2 of Chlorobium phaeobacteroides (strain DSM 266 / SMG 266 / 2430).